The following is a 766-amino-acid chain: ABC-type oligopeptide transporter ABCB9 (766 aa).

8 helical membrane-spanning segments follow: residues 7 to 27 (VVVT…IYVF), 47 to 67 (VLDL…ATIG), 84 to 104 (LVIT…LLLF), 116 to 136 (FWAL…LWWL), 185 to 205 (VAFL…ETFL), 225 to 245 (FSTA…AAGI), 319 to 339 (VFMF…FPII), and 416 to 436 (SGLT…HLVI). The 284-residue stretch at 188-471 (LVAASFFLIV…VGSVYSGLMQ (284 aa)) folds into the ABC transmembrane type-1 domain. The ABC transporter domain maps to 504–740 (VDFENVTFTY…GGLYAKLVQR (237 aa)). 539–546 (GPSGSGKS) is an ATP binding site.

This sequence belongs to the ABC transporter superfamily. ABCB family. MHC peptide exporter (TC 3.A.1.209) subfamily. In terms of assembly, homodimer. Interacts (via TMD0 region) with LAMP1; this interaction strongly stabilizes ABCB9 and protects ABCB9 against lysosomal degradation. Interacts (via TMD0 region) with LAMP2 (isoform LAMP-2B). Interacts (via TMD0) with YIF1B; this interaction allows (but is not essential) the ER-to-Golgi trafficking and strongly depends on a salt bridge within TMD0. Highly expressed in testis, and at moderate levels in brain, spinal cord, and thyroid. Not expressed in monocytes but strongly expressed during differentiation of monocytes to dendritic cells and macrophages.

The protein localises to the lysosome membrane. It carries out the reaction a [oligopeptide](in) + ATP + H2O = a [oligopeptide](out) + ADP + phosphate + H(+). With respect to regulation, transport activity is limited by threshold levels of luminal peptide. ATP hydrolysis is reduced in the presence of the spatial challenging 18-mer peptide by 50% and the branched 16-mer peptide by 75%. Transport rate of the longer peptides is strongly reduced. Functionally, ATP-dependent low-affinity peptide transporter which translocates a broad spectrum of peptides from the cytosol to the lysosomal lumen for degradation. Displays a broad peptide length specificity from 6-mer up to at least 59-mer peptides with an optimum of 23-mers. Binds and transports smaller and larger peptides with the same affinity. Favors positively charged, aromatic or hydrophobic residues in the N- and C-terminal positions whereas negatively charged residues as well as asparagine and methionine are not favored. In Homo sapiens (Human), this protein is ABC-type oligopeptide transporter ABCB9.